A 572-amino-acid polypeptide reads, in one-letter code: Serine/threonine-protein kinase pak-1 (572 aa).

Disordered regions lie at residues 1–71 (MKAF…SRPS) and 156–195 (QPYS…QGVP). Residues 67–80 (ISRPSNFEHTIHVG) form the CRIB domain. Positions 81-294 (YDPKTGEFTG…IVSIGNPDRK (214 aa)) are linker. Polar residues predominate over residues 178 to 195 (PMTTSTSSAGYNSKQGVP). In terms of domain architecture, Protein kinase spans 295–546 (YRKVDKIGSG…ASQLLTHPFL (252 aa)). ATP contacts are provided by residues 301-309 (IGSGASGSV) and Lys-324. Asp-414 acts as the Proton acceptor in catalysis.

This sequence belongs to the protein kinase superfamily. STE Ser/Thr protein kinase family. STE20 subfamily. As to quaternary structure, interacts with cdc-42 (GTP-bound form) and cedd-10 (GTP-bound form). Mg(2+) is required as a cofactor. The cofactor is Mn(2+). Specifically colocalized with cdc-42 and ced-10 at all hypodermal cell boundaries during embryo elongation throughout the second phase of embryogenesis. Expressed mainly in pharyngeal muscles, the CAN neurons, motor neurons in the ventral nerve cord, several cells in the tail region (including the B and Y cells from L1 to adult, the hypodermal blast cell T in the L1 and some of its progeny in later stages), and the distal tip cells.

Its subcellular location is the cell membrane. The protein resides in the cytoplasm. It localises to the cell projection. It is found in the axon. The protein localises to the perikaryon. The enzyme catalyses L-seryl-[protein] + ATP = O-phospho-L-seryl-[protein] + ADP + H(+). It carries out the reaction L-threonyl-[protein] + ATP = O-phospho-L-threonyl-[protein] + ADP + H(+). Required for hypodermal cell fusion, together with cdc-42 and ced-10, leading to embryonic body elongation, which involves dramatic cytoskeletal reorganization. Plays a redundant role with max-2 in dorsal axonal guidance in ventral cord commissural motoneurons and in P neuroblast migration. Acts probably downstream of Rho GTPases mig-2 and ced-10 to regulate these 2 processes. Involved in orientating axonal growth of HSN neurons. During gonad morphogenesis and probably in association with pix-1 and git-1, involved in the migration of distal tip cell (DTC) and in maintaining their sharp tapering morphology. In addition, plays a redundant role with max-2 in DTC-mediated guidance of gonad elongation. May phosphorylate mlc-4. The protein is Serine/threonine-protein kinase pak-1 (pak-1) of Caenorhabditis elegans.